Here is a 201-residue protein sequence, read N- to C-terminus: Small ribosomal subunit protein uS4 (201 aa).

Residues 91-155 enclose the S4 RNA-binding domain; it reads TRLDNVVYRA…STLPFQVARE (65 aa).

It belongs to the universal ribosomal protein uS4 family. In terms of assembly, part of the 30S ribosomal subunit. Contacts protein S5. The interaction surface between S4 and S5 is involved in control of translational fidelity.

In terms of biological role, one of the primary rRNA binding proteins, it binds directly to 16S rRNA where it nucleates assembly of the body of the 30S subunit. Functionally, with S5 and S12 plays an important role in translational accuracy. The sequence is that of Small ribosomal subunit protein uS4 from Nocardia farcinica (strain IFM 10152).